The primary structure comprises 626 residues: Chaperone protein HtpG (626 aa).

The a; substrate-binding stretch occupies residues 1–339; it reads MSTNQETRGF…SNDLPLNVSR (339 aa). Positions 340–555 are b; the sequence is EILQDNKVTA…NDQMTTQMAK (216 aa). A c region spans residues 556–626; it reads LFAAAGQPVP…FIKRVNNLLG (71 aa).

It belongs to the heat shock protein 90 family. As to quaternary structure, homodimer.

Its subcellular location is the cytoplasm. Molecular chaperone. Has ATPase activity. In Histophilus somni (strain 2336) (Haemophilus somnus), this protein is Chaperone protein HtpG.